The following is a 367-amino-acid chain: Probable peptidoglycan glycosyltransferase FtsW (367 aa).

9 helical membrane passes run 32-52, 57-77, 87-107, 119-139, 149-169, 171-191, 251-271, 296-316, and 323-343; these read LIFI…PMKF, AFWG…PGIG, IPIG…MIVF, IHGL…CFLL, MVVV…FALF, LLFL…PWRM, VVGE…FVLL, GVVV…FGVF, and LPFI…FGLL.

It belongs to the SEDS family. FtsW subfamily.

It localises to the cell inner membrane. The enzyme catalyses [GlcNAc-(1-&gt;4)-Mur2Ac(oyl-L-Ala-gamma-D-Glu-L-Lys-D-Ala-D-Ala)](n)-di-trans,octa-cis-undecaprenyl diphosphate + beta-D-GlcNAc-(1-&gt;4)-Mur2Ac(oyl-L-Ala-gamma-D-Glu-L-Lys-D-Ala-D-Ala)-di-trans,octa-cis-undecaprenyl diphosphate = [GlcNAc-(1-&gt;4)-Mur2Ac(oyl-L-Ala-gamma-D-Glu-L-Lys-D-Ala-D-Ala)](n+1)-di-trans,octa-cis-undecaprenyl diphosphate + di-trans,octa-cis-undecaprenyl diphosphate + H(+). Its pathway is cell wall biogenesis; peptidoglycan biosynthesis. Functionally, peptidoglycan polymerase that is essential for cell division. This Taylorella equigenitalis (strain MCE9) protein is Probable peptidoglycan glycosyltransferase FtsW.